The primary structure comprises 853 residues: Rod cGMP-specific 3',5'-cyclic phosphodiesterase subunit beta (853 aa).

At S2 the chain carries N-acetylserine. 2 consecutive GAF domains span residues 71–220 (NMER…TLNL) and 252–429 (DIER…GWSV). One can recognise a PDEase domain in the interval 481–814 (EEDELGKILK…KEWKALADEY (334 aa)). H557 serves as the catalytic Proton donor. Residues H561, H597, D598, and D718 each contribute to the a divalent metal cation site. Residue C850 is modified to Cysteine methyl ester. C850 carries S-geranylgeranyl cysteine lipidation. A propeptide spans 851–853 (RIL) (removed in mature form).

It belongs to the cyclic nucleotide phosphodiesterase family. Oligomer composed of two catalytic chains (alpha and beta), an inhibitory chain (gamma) and the delta chain. Requires a divalent metal cation as cofactor.

The protein resides in the membrane. The protein localises to the cell projection. Its subcellular location is the cilium. It localises to the photoreceptor outer segment. It carries out the reaction 3',5'-cyclic GMP + H2O = GMP + H(+). In terms of biological role, necessary for the formation of a functional phosphodiesterase holoenzyme. Involved in retinal circadian rhythm photoentrainment via modulation of UVA and orange light-induced phase-shift of the retina clock. May participate in processes of transmission and amplification of the visual signal. Rod-specific cGMP phosphodiesterase that catalyzes the hydrolysis of 3',5'-cyclic GMP. Necessary for the formation of a functional phosphodiesterase holoenzyme. Involved in retinal circadian rhythm photoentrainment via modulation of UVA and orange light-induced phase-shift of the retina clock. May participate in processes of transmission and amplification of the visual signal. The polypeptide is Rod cGMP-specific 3',5'-cyclic phosphodiesterase subunit beta (PDE6B) (Bos taurus (Bovine)).